A 93-amino-acid polypeptide reads, in one-letter code: Acylphosphatase (93 aa).

One can recognise an Acylphosphatase-like domain in the interval 5-93 (TAILRVTGFV…EDRKTFDIVY (89 aa)). Residues Arg-20 and Asn-38 contribute to the active site.

This sequence belongs to the acylphosphatase family.

It catalyses the reaction an acyl phosphate + H2O = a carboxylate + phosphate + H(+). The sequence is that of Acylphosphatase (acyP) from Listeria welshimeri serovar 6b (strain ATCC 35897 / DSM 20650 / CCUG 15529 / CIP 8149 / NCTC 11857 / SLCC 5334 / V8).